We begin with the raw amino-acid sequence, 159 residues long: Lipoprotein signal peptidase (159 aa).

2 helical membrane-spanning segments follow: residues 64 to 84 (SVQW…IWVV) and 89 to 109 (PPFW…GNGI). Active-site residues include Asp-119 and Asp-135. A helical membrane pass occupies residues 130–150 (IFNPADIAINLAVLCFLVDLW).

Belongs to the peptidase A8 family.

It is found in the cell inner membrane. It catalyses the reaction Release of signal peptides from bacterial membrane prolipoproteins. Hydrolyzes -Xaa-Yaa-Zaa-|-(S,diacylglyceryl)Cys-, in which Xaa is hydrophobic (preferably Leu), and Yaa (Ala or Ser) and Zaa (Gly or Ala) have small, neutral side chains.. The protein operates within protein modification; lipoprotein biosynthesis (signal peptide cleavage). Its function is as follows. This protein specifically catalyzes the removal of signal peptides from prolipoproteins. The sequence is that of Lipoprotein signal peptidase from Parasynechococcus marenigrum (strain WH8102).